The following is a 372-amino-acid chain: N-methyl-L-tryptophan oxidase (372 aa).

FAD is bound at residue 4–34 (DLIIIGSGSVGAAAGYYATRAGLKVLMTDAH). Cys307 is modified (S-8alpha-FAD cysteine).

This sequence belongs to the MSOX/MTOX family. MTOX subfamily. Monomer. Requires FAD as cofactor.

It carries out the reaction N(alpha)-methyl-L-tryptophan + O2 + H2O = L-tryptophan + formaldehyde + H2O2. Functionally, catalyzes the oxidative demethylation of N-methyl-L-tryptophan. This chain is N-methyl-L-tryptophan oxidase, found in Salmonella arizonae (strain ATCC BAA-731 / CDC346-86 / RSK2980).